The following is a 741-amino-acid chain: Moderate conductance mechanosensitive channel YbiO (741 aa).

Positions 1-18 (MRWILFILFCLLGAPAHA) are cleaved as a signal peptide. The segment at 22–42 (PGVTTTTTTDSTTEPAPEPDI) is disordered. The span at 25–34 (TTTTTTDSTT) shows a compositional bias: low complexity. A run of 11 helical transmembrane segments spans residues 143 to 163 (MLAV…LPLY), 185 to 205 (AMII…LFVG), 225 to 245 (LFLN…LIFC), 268 to 288 (LSWL…IISN), 294 to 314 (IGAL…LYLI), 343 to 363 (FALV…FFSL), 372 to 392 (FMMG…FVSG), 432 to 452 (ILTV…FDFW), 466 to 486 (ILIR…VLAS), 509 to 529 (LLTL…IMIV), and 533 to 553 (IGVN…AISF).

This sequence belongs to the MscS (TC 1.A.23) family. Homoheptamer.

The protein resides in the cell inner membrane. Functionally, mechanosensitive channel that protects cells against hypoosmotic stress when highly overexpressed. The protein is Moderate conductance mechanosensitive channel YbiO (ybiO) of Escherichia coli (strain K12).